The primary structure comprises 291 residues: Pyridoxal 5'-phosphate synthase subunit PdxS (291 aa).

Residue D23 coordinates D-ribose 5-phosphate. K80 serves as the catalytic Schiff-base intermediate with D-ribose 5-phosphate. G152 contributes to the D-ribose 5-phosphate binding site. R164 provides a ligand contact to D-glyceraldehyde 3-phosphate. D-ribose 5-phosphate is bound by residues G213 and 234-235 (GS).

Belongs to the PdxS/SNZ family. As to quaternary structure, in the presence of PdxT, forms a dodecamer of heterodimers.

The enzyme catalyses aldehydo-D-ribose 5-phosphate + D-glyceraldehyde 3-phosphate + L-glutamine = pyridoxal 5'-phosphate + L-glutamate + phosphate + 3 H2O + H(+). The protein operates within cofactor biosynthesis; pyridoxal 5'-phosphate biosynthesis. Its function is as follows. Catalyzes the formation of pyridoxal 5'-phosphate from ribose 5-phosphate (RBP), glyceraldehyde 3-phosphate (G3P) and ammonia. The ammonia is provided by the PdxT subunit. Can also use ribulose 5-phosphate and dihydroxyacetone phosphate as substrates, resulting from enzyme-catalyzed isomerization of RBP and G3P, respectively. This chain is Pyridoxal 5'-phosphate synthase subunit PdxS, found in Bifidobacterium adolescentis (strain ATCC 15703 / DSM 20083 / NCTC 11814 / E194a).